A 69-amino-acid chain; its full sequence is Alpha-conotoxin Mr1.7a (69 aa).

Positions 1-21 are cleaved as a signal peptide; sequence MGMRMMFTVFLLVVLATTVVS. Positions 22–49 are excised as a propeptide; that stretch reads FTSNRVLDPAFRRRNAAAKASDLIALNA. 4-hydroxyproline; in Mr1.7b occurs at positions 52 and 58. 2 disulfides stabilise this stretch: C54–C60 and C55–C68. The lacks the Ser-Xaa-Pro motif that is crucial for potent interaction with nAChR stretch occupies residues 56-58; sequence THP. C68 carries the post-translational modification Cysteine amide.

It belongs to the conotoxin A superfamily. Post-translationally, two 4-hydroxyprolines have been detected by MS but the assignment of which of the three prolines is modified is uncertain. In terms of tissue distribution, expressed by the venom duct.

Its subcellular location is the secreted. In terms of biological role, acts as a co-agonist with PNU (an alpha-7 nAChR-selective allosteric modulator) at the endogenous alpha-7/CHRNA7 nicotinic acetylcholine receptors (nAChR) when tested in human SH-SY5Y neuroblastoma cells. Is the third alpha-conotoxin that acts as an agonist (after alpha-conotoxin SrIA/SrIB). Also acts as an antagonist at human alpha-7 nAChRs heterologously expressed in Xenopus oocytes. Has possibly a distinct nAChR binding mode from other alpha-conotoxins, due to a different three residue motif (lacks the Ser-Xaa-Pro motif). Functionally, acts as a weak partial agonist at alpha-7/CHRNA7 nicotinic acetylcholine receptors (nAChR) when tested in human SH-SY5Y neuroblastoma cells. Has possibly a distinct nAChR binding mode from other alpha-conotoxins, due to a different three residue motif (lacks the Ser-Xaa-Pro motif). The sequence is that of Alpha-conotoxin Mr1.7a from Conus marmoreus (Marble cone).